We begin with the raw amino-acid sequence, 271 residues long: MPELPEVEVTRQGIAPHLVEQTVVDLIVRNASLRWPVPELAKQIIGQTIRQVRRRAKYLLIDTDAGTSIVHLGMSGSLRILPHDTPVEKHDHIDLVLANGRILRFNDPRRFGAWLWCQLPEEAHPLLEKLGPEPLTDAFNVNQLAAALAGKKKAIKLCLMDNHIVVGVGNIYANEALFAAGIHPEAEAGKIDIERLTVLVAEVKQILAHAIKQGGTTLKDFTNAEGKPGYFAQKLHVYGRGGETCTQCGNLLSEIRLGQRTTVFCGICQTR.

Catalysis depends on P2, which acts as the Schiff-base intermediate with DNA. The active-site Proton donor is the E3. The Proton donor; for beta-elimination activity role is filled by K57. 3 residues coordinate DNA: H90, R109, and K151. Residues 236 to 270 (HVYGRGGETCTQCGNLLSEIRLGQRTTVFCGICQT) form an FPG-type zinc finger. The active-site Proton donor; for delta-elimination activity is R260.

Belongs to the FPG family. Monomer. It depends on Zn(2+) as a cofactor.

The catalysed reaction is Hydrolysis of DNA containing ring-opened 7-methylguanine residues, releasing 2,6-diamino-4-hydroxy-5-(N-methyl)formamidopyrimidine.. The enzyme catalyses 2'-deoxyribonucleotide-(2'-deoxyribose 5'-phosphate)-2'-deoxyribonucleotide-DNA = a 3'-end 2'-deoxyribonucleotide-(2,3-dehydro-2,3-deoxyribose 5'-phosphate)-DNA + a 5'-end 5'-phospho-2'-deoxyribonucleoside-DNA + H(+). In terms of biological role, involved in base excision repair of DNA damaged by oxidation or by mutagenic agents. Acts as a DNA glycosylase that recognizes and removes damaged bases. Has a preference for oxidized purines, such as 7,8-dihydro-8-oxoguanine (8-oxoG). Has AP (apurinic/apyrimidinic) lyase activity and introduces nicks in the DNA strand. Cleaves the DNA backbone by beta-delta elimination to generate a single-strand break at the site of the removed base with both 3'- and 5'-phosphates. The protein is Formamidopyrimidine-DNA glycosylase of Shewanella sp. (strain MR-7).